A 175-amino-acid chain; its full sequence is ATP synthase subunit b (175 aa).

Residues 14-34 traverse the membrane as a helical segment; that stretch reads LSPNPGLIFWTTVSFVIVLLI.

Belongs to the ATPase B chain family. As to quaternary structure, F-type ATPases have 2 components, F(1) - the catalytic core - and F(0) - the membrane proton channel. F(1) has five subunits: alpha(3), beta(3), gamma(1), delta(1), epsilon(1). F(0) has four main subunits: a(1), b(2) and c(10-14). The alpha and beta chains form an alternating ring which encloses part of the gamma chain. F(1) is attached to F(0) by a central stalk formed by the gamma and epsilon chains, while a peripheral stalk is formed by the delta and b chains.

Its subcellular location is the cell inner membrane. Its function is as follows. F(1)F(0) ATP synthase produces ATP from ADP in the presence of a proton or sodium gradient. F-type ATPases consist of two structural domains, F(1) containing the extramembraneous catalytic core and F(0) containing the membrane proton channel, linked together by a central stalk and a peripheral stalk. During catalysis, ATP synthesis in the catalytic domain of F(1) is coupled via a rotary mechanism of the central stalk subunits to proton translocation. Component of the F(0) channel, it forms part of the peripheral stalk, linking F(1) to F(0). The protein is ATP synthase subunit b of Chlorobium phaeobacteroides (strain DSM 266 / SMG 266 / 2430).